A 20-amino-acid chain; its full sequence is Pregnancy-associated glycoprotein 60H (20 aa).

N4 carries an N-linked (GlcNAc...) asparagine glycan.

This sequence belongs to the peptidase A1 family. As to expression, chorionic epithelium (trophectoderm) and placental cotyledons.

The protein resides in the secreted. Its subcellular location is the extracellular space. The protein is Pregnancy-associated glycoprotein 60H of Bison bonasus (European bison).